The primary structure comprises 730 residues: MTENWKFRRRTFLKHGAQAATLAGLSGLFPETLRRALAVEPDIRTGTIQDVQHVVILMQENRSFDHYFGHLNGVRGFNDPRALKRQDGKPVWYQNYKYEFSPYHWDTKVTSAQWVSSQNHEWSAFHAIWNQGRNDKWMAVQYPEAMGYFKRGDIPYYYALADAFTLCEAYHQSMMGPTNPNRLYHMSGRAAPSGDGKDVHIGNDMGDGTIGASGTVDWTTYPERLSAAGVDWRVYQEGGYRSSSLWYLYVDAYWKYRLQEQNNYDCNALAWFRNFKNAPRDSDLWQRAMLARGVDQLRKDVQENTLPQVSWIVAPYCYCEHPWWGPSFGEYYVTRVLEALTSNPEVWARTVFILNYDEGDGFYDHASAPVPPWKDGVGLSTVSTAGEIEVSSGLPIGLGHRVPLIAISPWSKGGKVSAEVFDHTSVLRFLERRFGVVEENISPWRRAVCGDLTSLFDFQGAGDTQVAPDLTNVPQSDARKEDAYWQQFYRPSPKYWSYEPKSLPGQEKGQRPTLAVPYQLHATLALDIAAGKLRLTLGNDGMSLPGNPQGHSAAVFQVQPREVGNPRFYTVTSYPVVQESGEELGRTLNDELDDLLDANGRYAFEVHGPNGFFREFHGNLHLAAQMARPEVSVTYQRNGNLQLNIRNLGRLPCSVTVTPNPAYTREGSRRYELEPNQAISEVWLLRSSQGWYDLSVTASNTEANYLRRLAGHVETGKPSRSDPLLDIAAT.

The segment at residues 1–38 is a signal peptide (tat-type signal); the sequence is MTENWKFRRRTFLKHGAQAATLAGLSGLFPETLRRALA.

This sequence belongs to the bacterial phospholipase C family. Predicted to be exported by the Tat system. The position of the signal peptide cleavage has not been experimentally proven.

It catalyses the reaction a 1,2-diacyl-sn-glycero-3-phosphocholine + H2O = phosphocholine + a 1,2-diacyl-sn-glycerol + H(+). Hydrolyzes sphingomyelin in addition to phosphatidylcholine. This is Hemolytic phospholipase C (plcH) from Pseudomonas aeruginosa (strain ATCC 15692 / DSM 22644 / CIP 104116 / JCM 14847 / LMG 12228 / 1C / PRS 101 / PAO1).